We begin with the raw amino-acid sequence, 437 residues long: GTPase Obg (437 aa).

Positions 2 to 160 (SMFLDTAKIK…RNLELELKVL (159 aa)) constitute an Obg domain. The OBG-type G domain maps to 161 to 338 (ADVGLVGFPS…LLEATAELLE (178 aa)). GTP-binding positions include 167-174 (GFPSVGKS), 192-196 (FTTIV), 214-217 (DLPG), 284-287 (NKMD), and 319-321 (SGI). Mg(2+) contacts are provided by Ser174 and Thr194. Residues 359–437 (GFNPDEPEFA…IGKFEFEFVD (79 aa)) form the OCT domain.

It belongs to the TRAFAC class OBG-HflX-like GTPase superfamily. OBG GTPase family. As to quaternary structure, monomer. Mg(2+) is required as a cofactor.

The protein localises to the cytoplasm. An essential GTPase which binds GTP, GDP and possibly (p)ppGpp with moderate affinity, with high nucleotide exchange rates and a fairly low GTP hydrolysis rate. Plays a role in control of the cell cycle, stress response, ribosome biogenesis and in those bacteria that undergo differentiation, in morphogenesis control. This Streptococcus suis (strain 05ZYH33) protein is GTPase Obg.